A 100-amino-acid polypeptide reads, in one-letter code: Large ribosomal subunit protein uL23 (100 aa).

The protein belongs to the universal ribosomal protein uL23 family. In terms of assembly, part of the 50S ribosomal subunit. Contacts protein L29, and trigger factor when it is bound to the ribosome.

Its function is as follows. One of the early assembly proteins it binds 23S rRNA. One of the proteins that surrounds the polypeptide exit tunnel on the outside of the ribosome. Forms the main docking site for trigger factor binding to the ribosome. This Shewanella pealeana (strain ATCC 700345 / ANG-SQ1) protein is Large ribosomal subunit protein uL23.